Here is a 593-residue protein sequence, read N- to C-terminus: NADH-quinone oxidoreductase subunit C/D (593 aa).

The NADH dehydrogenase I subunit C stretch occupies residues 1–184 (MTADNALYIP…DPYSLTLAKQ (184 aa)). Residues 208–593 (DYMFLNLGPN…IDFVMADVDR (386 aa)) form an NADH dehydrogenase I subunit D region.

It in the N-terminal section; belongs to the complex I 30 kDa subunit family. In the C-terminal section; belongs to the complex I 49 kDa subunit family. As to quaternary structure, NDH-1 is composed of 13 different subunits. Subunits NuoB, CD, E, F, and G constitute the peripheral sector of the complex.

Its subcellular location is the cell inner membrane. The catalysed reaction is a quinone + NADH + 5 H(+)(in) = a quinol + NAD(+) + 4 H(+)(out). Functionally, NDH-1 shuttles electrons from NADH, via FMN and iron-sulfur (Fe-S) centers, to quinones in the respiratory chain. The immediate electron acceptor for the enzyme in this species is believed to be ubiquinone. Couples the redox reaction to proton translocation (for every two electrons transferred, four hydrogen ions are translocated across the cytoplasmic membrane), and thus conserves the redox energy in a proton gradient. This Pseudomonas savastanoi pv. phaseolicola (strain 1448A / Race 6) (Pseudomonas syringae pv. phaseolicola (strain 1448A / Race 6)) protein is NADH-quinone oxidoreductase subunit C/D.